The following is a 642-amino-acid chain: Threonine--tRNA ligase (642 aa).

Residues 1 to 61 (MPVITLPDGS…DTDSELSIIT (61 aa)) enclose the TGS domain. The tract at residues 243-534 (DHRKIGKQLD…LIEEYAGKFP (292 aa)) is catalytic. The Zn(2+) site is built by C334, H385, and H511.

The protein belongs to the class-II aminoacyl-tRNA synthetase family. In terms of assembly, homodimer. It depends on Zn(2+) as a cofactor.

It is found in the cytoplasm. The enzyme catalyses tRNA(Thr) + L-threonine + ATP = L-threonyl-tRNA(Thr) + AMP + diphosphate + H(+). Catalyzes the attachment of threonine to tRNA(Thr) in a two-step reaction: L-threonine is first activated by ATP to form Thr-AMP and then transferred to the acceptor end of tRNA(Thr). Also edits incorrectly charged L-seryl-tRNA(Thr). This is Threonine--tRNA ligase from Shewanella piezotolerans (strain WP3 / JCM 13877).